A 630-amino-acid chain; its full sequence is DELLA protein DWARF8 (630 aa).

A disordered region spans residues 1-35 (MKREYQDAGGSGGDMGSSKDKMMAAAAGAGEQEEE). Positions 38 to 42 (DELLA) match the DELLA motif motif. Residues 161–222 (PIPSPVAAPS…AAPPATQASA (62 aa)) are disordered. Composition is skewed to low complexity over residues 165–176 (PVAAPSADPSTD) and 191–222 (TSSS…QASA). One can recognise a GRAS domain in the interval 234 to 623 (VDTQEAGIRL…RPLIATSAWR (390 aa)). Residues 241 to 297 (IRLVHALLACAEAVQQENFSAAEALVKQIPMLASSQGGAMRKVAAYFGEALARRVYR) are leucine repeat I (LRI). The LxCxE motif motif lies at 248–252 (LACAE). Residues 316-381 (HAHFYESCPY…GGPPSFRLTG (66 aa)) form a VHIID region. The VHIID signature appears at 347-351 (VHVVD). Residues 395-427 (QVGWKLAQFAHTIRVDFQYRGLVAATLADLEPF) form a leucine repeat II (LRII) region. Residues 443–544 (IAVNSVFELH…EVYLGRQICN (102 aa)) are PFYRE. An LXXLL motif motif is present at residues 451–455 (LHRLL). The tract at residues 547-623 (ACEGAERTER…RPLIATSAWR (77 aa)) is SAW.

Belongs to the GRAS family. DELLA subfamily. Phosphorylated. Post-translationally, ubiquitinated. Upon GA application it is ubiquitinated, leading to its subsequent degradation.

The protein localises to the nucleus. In terms of biological role, probable transcriptional regulator that acts as a repressor of the gibberellin (GA) signaling pathway. Probably acts by participating in large multiprotein complexes that repress transcription of GA-inducible genes. Upon GA application, it is degraded by the proteasome, allowing the GA signaling pathway. The sequence is that of DELLA protein DWARF8 (D8) from Zea mays (Maize).